The chain runs to 121 residues: Large ribosomal subunit protein uL18 (121 aa).

This sequence belongs to the universal ribosomal protein uL18 family. Part of the 50S ribosomal subunit; part of the 5S rRNA/L5/L18/L25 subcomplex. Contacts the 5S and 23S rRNAs.

Its function is as follows. This is one of the proteins that bind and probably mediate the attachment of the 5S RNA into the large ribosomal subunit, where it forms part of the central protuberance. In Streptococcus suis (strain 98HAH33), this protein is Large ribosomal subunit protein uL18.